The following is a 475-amino-acid chain: Bifunctional protein HldE (475 aa).

The interval 1 to 320 (MNSSYLNFKD…AIMFQRSHNT (320 aa)) is ribokinase. 196–199 (NLLE) serves as a coordination point for ATP. Asp265 is a catalytic residue. Positions 346–475 (FTNGCFDILH…TTSIIEKANL (130 aa)) are cytidylyltransferase.

The protein in the N-terminal section; belongs to the carbohydrate kinase PfkB family. In the C-terminal section; belongs to the cytidylyltransferase family. Homodimer.

The enzyme catalyses D-glycero-beta-D-manno-heptose 7-phosphate + ATP = D-glycero-beta-D-manno-heptose 1,7-bisphosphate + ADP + H(+). It carries out the reaction D-glycero-beta-D-manno-heptose 1-phosphate + ATP + H(+) = ADP-D-glycero-beta-D-manno-heptose + diphosphate. It functions in the pathway nucleotide-sugar biosynthesis; ADP-L-glycero-beta-D-manno-heptose biosynthesis; ADP-L-glycero-beta-D-manno-heptose from D-glycero-beta-D-manno-heptose 7-phosphate: step 1/4. It participates in nucleotide-sugar biosynthesis; ADP-L-glycero-beta-D-manno-heptose biosynthesis; ADP-L-glycero-beta-D-manno-heptose from D-glycero-beta-D-manno-heptose 7-phosphate: step 3/4. Catalyzes the phosphorylation of D-glycero-D-manno-heptose 7-phosphate at the C-1 position to selectively form D-glycero-beta-D-manno-heptose-1,7-bisphosphate. In terms of biological role, catalyzes the ADP transfer from ATP to D-glycero-beta-D-manno-heptose 1-phosphate, yielding ADP-D-glycero-beta-D-manno-heptose. In Marinomonas sp. (strain MWYL1), this protein is Bifunctional protein HldE.